We begin with the raw amino-acid sequence, 595 residues long: FERM domain-containing protein 3 (595 aa).

Positions 32–312 (MKCTIRLLDD…ENQAFYKYAK (281 aa)) constitute an FERM domain. The chain crosses the membrane as a helical span at residues 529 to 549 (LLVVGLGLLLFVFPLLLLLLE).

Its subcellular location is the membrane. Its function is as follows. Putative tumor suppressor gene that may be implicated in the origin and progression of lung cancer. The sequence is that of FERM domain-containing protein 3 (Frmd3) from Mus musculus (Mouse).